A 345-amino-acid polypeptide reads, in one-letter code: N(4)-(Beta-N-acetylglucosaminyl)-L-asparaginase (345 aa).

The signal sequence occupies residues 1 to 23 (MARKWNLPFLLLPLVLGIPLVRG). A glycan (N-linked (GlcNAc...) asparagine) is linked at Asn38. Cys64 and Cys69 are disulfide-bonded. Asn149 carries an N-linked (GlcNAc...) asparagine glycan. The cysteines at positions 163 and 179 are disulfide-linked. Thr205 (nucleophile) is an active-site residue. Residues 233–236 (RVGD) and 256–259 (TGDG) contribute to the substrate site. Cys285 and Cys305 are oxidised to a cystine. Asn307 carries an N-linked (GlcNAc...) asparagine glycan. Cys316 and Cys344 are oxidised to a cystine.

It belongs to the Ntn-hydrolase family. In terms of assembly, heterotetramer of two alpha and two beta chains arranged as a dimer of alpha/beta heterodimers. In terms of processing, N-glycosylated. Post-translationally, cleaved into an alpha and beta chain by autocatalysis; this activates the enzyme. The N-terminal residue of the beta subunit is responsible for the nucleophile hydrolase activity.

It localises to the lysosome. The enzyme catalyses N(4)-(beta-N-acetyl-D-glucosaminyl)-L-asparagine + H2O = N-acetyl-beta-D-glucosaminylamine + L-aspartate + H(+). Its function is as follows. Cleaves the GlcNAc-Asn bond which joins oligosaccharides to the peptide of asparagine-linked glycoproteins. The protein is N(4)-(Beta-N-acetylglucosaminyl)-L-asparaginase (Aga) of Rattus norvegicus (Rat).